Consider the following 177-residue polypeptide: tRNA-splicing endonuclease (177 aa).

Residues tyrosine 114, histidine 123, and lysine 154 contribute to the active site.

The protein belongs to the tRNA-intron endonuclease family. Archaeal short subfamily. As to quaternary structure, homotetramer; although the tetramer contains four active sites, only two participate in the cleavage. Therefore, it should be considered as a dimer of dimers.

It carries out the reaction pretRNA = a 3'-half-tRNA molecule with a 5'-OH end + a 5'-half-tRNA molecule with a 2',3'-cyclic phosphate end + an intron with a 2',3'-cyclic phosphate and a 5'-hydroxyl terminus.. Its function is as follows. Endonuclease that removes tRNA introns. Cleaves pre-tRNA at the 5'- and 3'-splice sites to release the intron. The products are an intron and two tRNA half-molecules bearing 2',3' cyclic phosphate and 5'-OH termini. Recognizes a pseudosymmetric substrate in which 2 bulged loops of 3 bases are separated by a stem of 4 bp. This Methanococcus vannielii (strain ATCC 35089 / DSM 1224 / JCM 13029 / OCM 148 / SB) protein is tRNA-splicing endonuclease.